Reading from the N-terminus, the 181-residue chain is GMP synthase [glutamine-hydrolyzing] subunit A (181 aa).

The Glutamine amidotransferase type-1 domain occupies lysine 2 to arginine 181. The active-site Nucleophile is cysteine 72. Active-site residues include histidine 159 and glutamate 161.

In terms of assembly, heterodimer composed of a glutamine amidotransferase subunit (A) and a GMP-binding subunit (B).

It carries out the reaction XMP + L-glutamine + ATP + H2O = GMP + L-glutamate + AMP + diphosphate + 2 H(+). It functions in the pathway purine metabolism; GMP biosynthesis; GMP from XMP (L-Gln route): step 1/1. Catalyzes the synthesis of GMP from XMP. The polypeptide is GMP synthase [glutamine-hydrolyzing] subunit A (Methanothrix thermoacetophila (strain DSM 6194 / JCM 14653 / NBRC 101360 / PT) (Methanosaeta thermophila)).